We begin with the raw amino-acid sequence, 342 residues long: MKSAMTALALSVGDPSGIGPEIAIAAFLAREAVGLPAFYLLADPALIASRASRLGVSVPIVETTPALAAQVFARALPIVPLAARFIDSPGRPDPANAAGTVEAIDRAVAACLAGDAAAMVTCPIAKKPLYDAGFRFPGHTEYLAHLAARHSGVEAMPVMMLAGPDLRTVPVTIHIALAEVPKALTTELIVATARITAADLAGRFGIARPRLAIAGLNPHAGEGGSLGLEDEHIVRPAVDILRAEGIDAFGPLAADTLFHARARAGYDAALCMYHDQALIPAKTLAFDDAVNVTLGLPFIRTSPDHGTAFDIAGKGIARPDSLIAALKLARTLADTDKKAAAA.

The substrate site is built by His-139 and Thr-140. The a divalent metal cation site is built by His-174, His-219, and His-274. The substrate site is built by Lys-282, Asn-291, and Arg-300.

Belongs to the PdxA family. As to quaternary structure, homodimer. It depends on Zn(2+) as a cofactor. Mg(2+) serves as cofactor. The cofactor is Co(2+).

It localises to the cytoplasm. The catalysed reaction is 4-(phosphooxy)-L-threonine + NAD(+) = 3-amino-2-oxopropyl phosphate + CO2 + NADH. Its pathway is cofactor biosynthesis; pyridoxine 5'-phosphate biosynthesis; pyridoxine 5'-phosphate from D-erythrose 4-phosphate: step 4/5. Functionally, catalyzes the NAD(P)-dependent oxidation of 4-(phosphooxy)-L-threonine (HTP) into 2-amino-3-oxo-4-(phosphooxy)butyric acid which spontaneously decarboxylates to form 3-amino-2-oxopropyl phosphate (AHAP). The sequence is that of 4-hydroxythreonine-4-phosphate dehydrogenase from Mesorhizobium japonicum (strain LMG 29417 / CECT 9101 / MAFF 303099) (Mesorhizobium loti (strain MAFF 303099)).